The sequence spans 390 residues: Homeobox protein Meis1 (390 aa).

One can recognise an MEIS N-terminal domain in the interval 108–192 (GGDVCSSESF…IDLVIDDREG (85 aa)). The segment covering 190 to 202 (REGGSKSDSEDIT) has biased composition (basic and acidic residues). The segment at 190–279 (REGGSKSDSE…KKRHKKRGIF (90 aa)) is disordered. Positions 203-213 (RSANLTDQPSW) are enriched in polar residues. A DNA-binding region (homeobox; TALE-type) is located at residues 272 to 334 (RHKKRGIFPK…NARRRIVQPM (63 aa)). The segment at 299 to 329 (YPSEEQKKQLAQDTGLTILQVNNWFINARRR) is interaction with DNA. Positions 335 to 390 (IDQSNRAVSQGTPYNPDGQPMGGFVMDGQQHMGIRAPGPMSGMGMNMGMEGQWHYM) are required for transcriptional activation.

This sequence belongs to the TALE/MEIS homeobox family. Interacts with the N-terminal region of PBX1 to form a heterodimer which binds DNA including a cAMP-responsive sequence in CYP17. Also forms heterodimers with PBX2. Forms heterotrimers with PBX1 or PBX2 and a number of HOX proteins including HOXA9, HOXD4 and HOXD9 where it acts as a non-DNA-binding partner. Also forms heterotrimers with PBX1 and HOX proteins including HOXD9 and HOXD10 where PBX1 is the non-DNA-binding partner. Heterodimer with DLX3. Heterodimer with HOXB13. Expressed at low level in normal immunohepatopoietic tissues, including the fetal liver. Expressed in a subset of myeloid leukemia cell lines, with the highest expression seen in those with a megakaryocytic-erythroid phenotype. Also expressed at high levels in the cerebellum.

It localises to the nucleus. Acts as a transcriptional regulator of PAX6. Acts as a transcriptional activator of PF4 in complex with PBX1 or PBX2. Required for hematopoiesis, megakaryocyte lineage development and vascular patterning. May function as a cofactor for HOXA7 and HOXA9 in the induction of myeloid leukemias. The polypeptide is Homeobox protein Meis1 (MEIS1) (Homo sapiens (Human)).